Consider the following 367-residue polypeptide: tRNA/tmRNA (uracil-C(5))-methyltransferase (367 aa).

5 residues coordinate S-adenosyl-L-methionine: glutamine 190, tyrosine 218, asparagine 223, glutamate 239, and aspartate 299. The active-site Nucleophile is cysteine 324. The active-site Proton acceptor is the glutamate 358.

Belongs to the class I-like SAM-binding methyltransferase superfamily. RNA M5U methyltransferase family. TrmA subfamily.

It carries out the reaction uridine(54) in tRNA + S-adenosyl-L-methionine = 5-methyluridine(54) in tRNA + S-adenosyl-L-homocysteine + H(+). It catalyses the reaction uridine(341) in tmRNA + S-adenosyl-L-methionine = 5-methyluridine(341) in tmRNA + S-adenosyl-L-homocysteine + H(+). Its function is as follows. Dual-specificity methyltransferase that catalyzes the formation of 5-methyluridine at position 54 (m5U54) in all tRNAs, and that of position 341 (m5U341) in tmRNA (transfer-mRNA). The protein is tRNA/tmRNA (uracil-C(5))-methyltransferase of Yersinia enterocolitica serotype O:8 / biotype 1B (strain NCTC 13174 / 8081).